The chain runs to 379 residues: Cytochrome b (379 aa).

4 helical membrane passes run 32 to 52 (FGSLLGLCLATQILTGLFLAM), 76 to 97 (WLIRNMHANGASFFFICIYMHI), 112 to 132 (WNVGVILLLLVMMTAFVGYVL), and 177 to 197 (FFAFHFLFPFVIAAVTVIHLL). Residues His82 and His96 each coordinate heme b. The heme b site is built by His181 and His195. A ubiquinone is bound at residue His200. 4 consecutive transmembrane segments (helical) span residues 225–245 (YKDLLGFIIMMVALTSLALFS), 287–307 (LGGVLALLASILVLMLVPFLH), 319–339 (LTQILFWTFVANVIILTWIGG), and 346–366 (FIIIGQVASFLYFLLLLVLSP).

This sequence belongs to the cytochrome b family. The cytochrome bc1 complex contains 3 respiratory subunits (MT-CYB, CYC1 and UQCRFS1), 2 core proteins (UQCRC1 and UQCRC2) and probably 6 low-molecular weight proteins. Heme b serves as cofactor.

The protein localises to the mitochondrion inner membrane. Its function is as follows. Component of the ubiquinol-cytochrome c reductase complex (complex III or cytochrome b-c1 complex) that is part of the mitochondrial respiratory chain. The b-c1 complex mediates electron transfer from ubiquinol to cytochrome c. Contributes to the generation of a proton gradient across the mitochondrial membrane that is then used for ATP synthesis. This is Cytochrome b (mt-cyb) from Chlorophthalmus agassizi (Shortnose greeneye).